The following is a 218-amino-acid chain: Oxidoreductase claN (218 aa).

3 residues coordinate NADP(+): Lys-38, Asp-57, and Asn-82. Residue Ser-134 is the Proton donor of the active site. Tyr-148, Lys-152, and Thr-183 together coordinate NADP(+). Residue Tyr-148 is the Proton acceptor of the active site. Lys-152 (lowers pKa of active site Tyr) is an active-site residue.

This sequence belongs to the short-chain dehydrogenases/reductases (SDR) family.

It functions in the pathway pigment biosynthesis. Oxidoreductase; part of the gene cluster that mediates the biosynthesis of the bianthraquinone cladofulvin, a conidial pigment not required for virulence but that plays a role in fitness and resistance to environmental stresses including UV light and low-temperature stress. The pathway begins with the synthesis of atrochrysone thioester by the polyketide synthase (PKS) claG. The atrochrysone carboxyl ACP thioesterase claF then breaks the thioester bond and releases the atrochrysone carboxylic acid from claG. This compound is decarboxylated by claH to yield emodin, which is further converted to chrysophanol hydroquinone by the reductase claC and the dehydratase claB. The cytochrome P450 monooxygenase claM then catalyzes the dimerization of nataloe-emodin to cladofulvin. The sequence is that of Oxidoreductase claN from Passalora fulva (Tomato leaf mold).